The chain runs to 446 residues: Trigger factor (446 aa).

Positions 182 to 267 (GDKVVVDYQN…VKNIFMMKAI (86 aa)) constitute a PPIase FKBP-type domain.

It belongs to the FKBP-type PPIase family. Tig subfamily.

Its subcellular location is the cytoplasm. The enzyme catalyses [protein]-peptidylproline (omega=180) = [protein]-peptidylproline (omega=0). Functionally, involved in protein export. Acts as a chaperone by maintaining the newly synthesized protein in an open conformation. Functions as a peptidyl-prolyl cis-trans isomerase. The sequence is that of Trigger factor from Ehrlichia ruminantium (strain Gardel).